The sequence spans 718 residues: Ubiquitin homeostasis protein lub1 (718 aa).

WD repeat units follow at residues 12 to 50, 54 to 98, 101 to 139, 140 to 178, 180 to 217, 218 to 257, and 259 to 296; these read GHKQ…WTPH, NHEG…PSYY, GHES…YVLK, GHQS…KSIL, HNDC…YELH, GHTS…QCIT, and PTTS…VAPT. In terms of domain architecture, PFU spans 353 to 448; sequence QWSQKENEWK…QGHSLESKKE (96 aa). A PUL domain is found at 462-717; sequence TIFPVSQLLF…VDAEKQILSL (256 aa).

As to quaternary structure, interacts with cdc48.

The protein localises to the nucleus. It is found in the cytoplasm. Functionally, acts as a negative regulator of vacuole-dependent ubiquitin degradation. This chain is Ubiquitin homeostasis protein lub1 (lub1), found in Schizosaccharomyces pombe (strain 972 / ATCC 24843) (Fission yeast).